The primary structure comprises 132 residues: Agouti-signaling protein (132 aa).

The N-terminal stretch at 1 to 22 (MDVTRLLLATLLVFLCFFTACS) is a signal peptide. Asparagine 39 carries N-linked (GlcNAc...) asparagine glycosylation. A disordered region spans residues 61 to 87 (QISRKEAEKKRSSKKEASMKKVARPRT). Residues 63 to 79 (SRKEAEKKRSSKKEASM) are compositionally biased toward basic and acidic residues. 5 disulfides stabilise this stretch: cysteine 93–cysteine 108, cysteine 100–cysteine 114, cysteine 107–cysteine 125, cysteine 111–cysteine 132, and cysteine 116–cysteine 123. In terms of domain architecture, Agouti spans 93–132 (CVATRDSCKPPAPACCDPCASCQCRFFRSACSCRVLSLNC).

It is found in the secreted. Functionally, involved in the regulation of melanogenesis. The binding of ASP to MC1R precludes alpha-MSH initiated signaling and thus blocks production of cAMP, leading to a down-regulation of eumelanogenesis (brown/black pigment) and thus increasing synthesis of pheomelanin (yellow/red pigment). The polypeptide is Agouti-signaling protein (ASIP) (Macaca nigrescens (Gorontalo macaque)).